The following is a 901-amino-acid chain: Core protein VP3 (901 aa).

The protein belongs to the orbivirus VP3 family.

It is found in the virion. Functionally, the VP3 protein is one of the five proteins (with VP1, VP4, VP6 and VP7) which form the inner capsid of the virus. The protein is Core protein VP3 (Segment-3) of Bluetongue virus 11 (isolate USA) (BTV 11).